Here is a 197-residue protein sequence, read N- to C-terminus: Recombination protein RecR (197 aa).

The C4-type zinc finger occupies 56-71 (CQQCRNLSETEICGFC). The Toprim domain maps to 79–174 (DQLCIVETPT…SVTRLAQGIP (96 aa)).

Belongs to the RecR family.

In terms of biological role, may play a role in DNA repair. It seems to be involved in an RecBC-independent recombinational process of DNA repair. It may act with RecF and RecO. The chain is Recombination protein RecR from Hydrogenovibrio crunogenus (strain DSM 25203 / XCL-2) (Thiomicrospira crunogena).